Consider the following 219-residue polypeptide: Protein matrimony (219 aa).

The segment covering 74–99 (PPAKAHPHPHQHQHHHHHHKHIHRTQ) has biased composition (basic residues). Positions 74–104 (PPAKAHPHPHQHQHHHHHHKHIHRTQLKPPP) are disordered. In terms of domain architecture, SAM spans 159 to 219 (NHAANVEQIL…NRIMDVLQTL (61 aa)).

As to quaternary structure, interacts with polo. Interacts with cort. Probably ubiquitinated: degraded during the oocyte-to-embryo transition by the anaphase promoting complex/cyclosome (APC/C) containing cort protein.

The protein localises to the nucleus. It localises to the chromosome. Polo kinase inhibitor required to maintain G2 arrest in the meiotic cell cycle in females. Holds heterochromatically paired homologs together from the end of pachytene until metaphase I. Haploinsufficient locus for homologous achiasmate segregation and may be required for the maintenance of heterochromatic pairings. This chain is Protein matrimony (mtrm), found in Drosophila yakuba (Fruit fly).